Here is a 188-residue protein sequence, read N- to C-terminus: Killer cell lectin-like receptor subfamily G member 1 (188 aa).

The Cytoplasmic portion of the chain corresponds to 1 to 33 (MADSSIYSTLELPEAPQVQDESRWKLKAVLHRP). The ITIM motif signature appears at 5–10 (SIYSTL). The chain crosses the membrane as a helical; Signal-anchor for type II membrane protein span at residues 34 to 56 (HLSRFAMVALGLLTVILMSLLMY). Residues 57–188 (QRILCCGSKD…LQWICKKVLY (132 aa)) are Extracellular-facing. Cysteine 75 and cysteine 86 form a disulfide bridge. Asparagine 82 and asparagine 97 each carry an N-linked (GlcNAc...) asparagine glycan. Residues 82-184 (NGSHCYYFSM…CEVALQWICK (103 aa)) form the C-type lectin domain. 2 cysteine pairs are disulfide-bonded: cysteine 103–cysteine 183 and cysteine 162–cysteine 175.

As to quaternary structure, forms a monomer and homodimer; disulfide-linked. Interacts (via ITIM motif) with PTPN11 and INPP5D. Phosphorylated in response to monoclonal antibody G63 binding and antigenic stimulation. As to expression, expressed specifically on natural killer (NK) cells and activated CD8 T-cells. Not detected in spleen, thymus, lymph node, testis, brain or kidney. Not detected on mast cell lines, bone marrow-derived mast cells, or peritoneal mast cells.

The protein localises to the cell membrane. Functionally, plays an inhibitory role on natural killer (NK) cells and T-cell functions upon binding to their non-MHC ligands. May mediate missing self recognition by binding to a highly conserved site on classical cadherins, enabling it to monitor expression of E-cadherin/CDH1, N-cadherin/CDH2 and R-cadherin/CDH4 on target cells. The polypeptide is Killer cell lectin-like receptor subfamily G member 1 (Klrg1) (Mus musculus (Mouse)).